We begin with the raw amino-acid sequence, 670 residues long: Transcriptional regulatory protein DOT6 (670 aa).

Positions 1-44 (MSISTSLNSASIHLSSMDTHPQLHSLTRQPHSSSTAMSKNEAQE) are enriched in polar residues. Residues 1-78 (MSISTSLNSA…SKNPSSWDPQ (78 aa)) form a disordered region. A compositionally biased stretch (low complexity) spans 45 to 74 (SSPSLPASSSSSTSASASASSKNSSKNPSS). Positions 67-121 (NSSKNPSSWDPQDDLLLRHLKEVKKMGWKDISQYFPNRTPNACQFRWRRLKSGNL) constitute an HTH myb-type domain. Residues 94-117 (WKDISQYFPNRTPNACQFRWRRLK) constitute a DNA-binding region (H-T-H motif). Residues 226–242 (HHPHQHLHHHPHHKTLK) are compositionally biased toward basic residues. Disordered regions lie at residues 226-250 (HHPH…SHSF), 293-332 (TTPS…NTSR), 406-436 (HSSS…CNPT), and 483-659 (ADML…NSPL). Ser-245 and Ser-247 each carry phosphoserine. Composition is skewed to low complexity over residues 295-307 (PSSP…LLSS) and 316-332 (NWSR…NTSR). The span at 425-436 (SGHSMKSSCNPT) shows a compositional bias: polar residues. Ser-487 carries the phosphoserine modification. Thr-489 bears the Phosphothreonine mark. Ser-491 is modified (phosphoserine). Positions 512-522 (DDDKGSDKEDV) are enriched in basic and acidic residues. Composition is skewed to low complexity over residues 544–561 (SSNK…SSKD) and 587–598 (TITSDTSSSAAT). The segment covering 599 to 608 (MNRTPNSKNP) has biased composition (polar residues). Over residues 622–659 (ITPRPKPSSTTTSITTETTNNMINHSSSTTTTTNNSPL) the composition is skewed to low complexity.

It belongs to the DOT6 family. Component of the RPD3C(L) complex composed of at least ASH1, CTI6, DEP1, DOT6, PHO23, RPD3, RXT2, RXT3, SAP30, SDS3, SIN3, TOD6; UME1 and UME6.

The protein resides in the nucleus. Its function is as follows. Component of the RPD3 histone deacetylase complex RPD3C(L) responsible for the deacetylation of lysine residues on the N-terminal part of the core histones (H2A, H2B, H3 and H4). Histone deacetylation gives a tag for epigenetic repression and plays an important role in transcriptional regulation, cell cycle progression and developmental events. DOT6 binds to sequences containing the core CGATG, which resembles the PAC (Polymerase A and C) motif. This chain is Transcriptional regulatory protein DOT6 (DOT6), found in Saccharomyces cerevisiae (strain ATCC 204508 / S288c) (Baker's yeast).